The chain runs to 285 residues: Shikimate dehydrogenase (NADP(+)) (285 aa).

Residues 22–24 and threonine 71 each bind shikimate; that span reads SRS. Lysine 75 functions as the Proton acceptor in the catalytic mechanism. The shikimate site is built by asparagine 96 and aspartate 111. NADP(+)-binding positions include 136–140, 160–165, and isoleucine 225; these read GAGGA and NRTVGR. Shikimate is bound at residue tyrosine 227. Glycine 248 lines the NADP(+) pocket.

This sequence belongs to the shikimate dehydrogenase family. As to quaternary structure, homodimer.

It catalyses the reaction shikimate + NADP(+) = 3-dehydroshikimate + NADPH + H(+). It functions in the pathway metabolic intermediate biosynthesis; chorismate biosynthesis; chorismate from D-erythrose 4-phosphate and phosphoenolpyruvate: step 4/7. Functionally, involved in the biosynthesis of the chorismate, which leads to the biosynthesis of aromatic amino acids. Catalyzes the reversible NADPH linked reduction of 3-dehydroshikimate (DHSA) to yield shikimate (SA). In Rhizobium etli (strain CIAT 652), this protein is Shikimate dehydrogenase (NADP(+)).